The following is a 2224-amino-acid chain: Protein sidekick (2224 aa).

A signal peptide spans 1–47; the sequence is MLKSAASSLRRRRPKTTITATLAIEMPSQPKLASLLAVLVLLCYCDS. The Extracellular segment spans residues 48–2001; that stretch reads CFFCYADANL…LQHKPFYRQT (1954 aa). Residues 72–155 form the Ig-like C2-type 1 domain; sequence PRFTTHPSSS…SIFSEKSDVV (84 aa). An intrachain disulfide couples C95 to C138. N164, N250, N318, and N327 each carry an N-linked (GlcNAc...) asparagine glycan. 4 Ig-like C2-type domains span residues 261–355, 359–445, 455–541, and 546–636; these read PEII…ARLQ, PPLF…NSAS, PIME…AYLS, and TQII…ARLS. Disulfide bonds link C283–C336 and C382–C433. N-linked (GlcNAc...) asparagine glycans are attached at residues N463, N485, and N491. Cystine bridges form between C476/C525 and C567/C620. N-linked (GlcNAc...) asparagine glycans are attached at residues N628, N661, N707, N809, N870, N942, N1019, N1094, N1109, N1172, N1203, N1282, N1329, N1379, N1414, and N1420. Fibronectin type-III domains are found at residues 643-753, 758-855, 860-967, 971-1065, 1069-1164, 1169-1270, 1275-1372, 1376-1469, 1474-1570, 1575-1677, 1682-1785, 1789-1883, and 1885-1984; these read PPSN…LPQE, PPVG…TKEG, PPTN…TMDD, EVTG…VEPV, APTA…TIQA, PPFN…TREA, GPLD…TFED, VPSN…TNNR, APSV…TLPA, GVGG…VGEA, EPRA…TLPG, APLH…GPQD, and SPVA…TPSK. N-linked (GlcNAc...) asparagine glycosylation is found at N1843 and N1876. A helical membrane pass occupies residues 2002-2022; sequence WFMVSLAATSIVIIVMVIAVL. The Cytoplasmic portion of the chain corresponds to 2023–2224; sequence CVKSKSYKYK…APLPGFSSFV (202 aa). 2 disordered regions span residues 2068–2157 and 2171–2195; these read TLNS…RSDP and LRQS…PEGS. The residue at position 2071 (S2071) is a Phosphoserine. Over residues 2073 to 2085 the composition is skewed to low complexity; sequence GTLRSGTLGTLGR. T2074 carries the post-translational modification Phosphothreonine. 2 stretches are compositionally biased toward basic and acidic residues: residues 2112 to 2122 and 2144 to 2157; these read HSDEESLKCYD and QHSE…RSDP. A phosphoserine mark is found at S2113 and S2117.

Belongs to the sidekick family.

It is found in the membrane. In terms of biological role, participates in homotypic or heterotypic interactions in the eye during pattern formation to prevent extra cells from joining the precluster and differentiating as photoreceptor cells. This Drosophila melanogaster (Fruit fly) protein is Protein sidekick.